Here is a 561-residue protein sequence, read N- to C-terminus: Oxygen-dependent choline dehydrogenase (561 aa).

FAD is bound at residue 6-35 (DYIIIGAGSAGNVLATRLTEDADVSVLLLE). His-475 functions as the Proton acceptor in the catalytic mechanism.

It belongs to the GMC oxidoreductase family. FAD serves as cofactor.

It catalyses the reaction choline + A = betaine aldehyde + AH2. The catalysed reaction is betaine aldehyde + NAD(+) + H2O = glycine betaine + NADH + 2 H(+). Its pathway is amine and polyamine biosynthesis; betaine biosynthesis via choline pathway; betaine aldehyde from choline (cytochrome c reductase route): step 1/1. Involved in the biosynthesis of the osmoprotectant glycine betaine. Catalyzes the oxidation of choline to betaine aldehyde and betaine aldehyde to glycine betaine at the same rate. This is Oxygen-dependent choline dehydrogenase from Pseudomonas aeruginosa (strain LESB58).